The primary structure comprises 467 residues: 3-isopropylmalate dehydratase large subunit (467 aa).

Positions 347, 407, and 410 each coordinate [4Fe-4S] cluster.

It belongs to the aconitase/IPM isomerase family. LeuC type 1 subfamily. In terms of assembly, heterodimer of LeuC and LeuD. It depends on [4Fe-4S] cluster as a cofactor.

It catalyses the reaction (2R,3S)-3-isopropylmalate = (2S)-2-isopropylmalate. It functions in the pathway amino-acid biosynthesis; L-leucine biosynthesis; L-leucine from 3-methyl-2-oxobutanoate: step 2/4. Its function is as follows. Catalyzes the isomerization between 2-isopropylmalate and 3-isopropylmalate, via the formation of 2-isopropylmaleate. This Crocosphaera subtropica (strain ATCC 51142 / BH68) (Cyanothece sp. (strain ATCC 51142)) protein is 3-isopropylmalate dehydratase large subunit.